We begin with the raw amino-acid sequence, 487 residues long: Bifunctional protein GlmU (487 aa).

Residues 1–232 are pyrophosphorylase; it reads MAVIVLAAGA…AAELAGVNDR (232 aa). UDP-N-acetyl-alpha-D-glucosamine is bound by residues 6-9, K20, Q77, and 82-83; these read LAAG and GT. D107 lines the Mg(2+) pocket. The UDP-N-acetyl-alpha-D-glucosamine site is built by G142, E157, N172, and N230. N230 lines the Mg(2+) pocket. The linker stretch occupies residues 233 to 253; it reads VQLAAAGAELNRRTVTAAMRG. An N-acetyltransferase region spans residues 254-487; sequence GATIVDPATT…PTSTPQADQE (234 aa). Residues R335 and K353 each contribute to the UDP-N-acetyl-alpha-D-glucosamine site. The active-site Proton acceptor is the H365. Residues Y368 and N379 each contribute to the UDP-N-acetyl-alpha-D-glucosamine site. Acetyl-CoA contacts are provided by residues A382, 388-389, S407, and A425; that span reads NY. The segment at 453 to 487 is disordered; sequence AKKRPGTPAAEAGEAAAKRVAEGGSPTSTPQADQE. The span at 477 to 487 shows a compositional bias: polar residues; the sequence is SPTSTPQADQE.

This sequence in the N-terminal section; belongs to the N-acetylglucosamine-1-phosphate uridyltransferase family. The protein in the C-terminal section; belongs to the transferase hexapeptide repeat family. In terms of assembly, homotrimer. It depends on Mg(2+) as a cofactor.

It localises to the cytoplasm. The enzyme catalyses alpha-D-glucosamine 1-phosphate + acetyl-CoA = N-acetyl-alpha-D-glucosamine 1-phosphate + CoA + H(+). It catalyses the reaction N-acetyl-alpha-D-glucosamine 1-phosphate + UTP + H(+) = UDP-N-acetyl-alpha-D-glucosamine + diphosphate. The protein operates within nucleotide-sugar biosynthesis; UDP-N-acetyl-alpha-D-glucosamine biosynthesis; N-acetyl-alpha-D-glucosamine 1-phosphate from alpha-D-glucosamine 6-phosphate (route II): step 2/2. Its pathway is nucleotide-sugar biosynthesis; UDP-N-acetyl-alpha-D-glucosamine biosynthesis; UDP-N-acetyl-alpha-D-glucosamine from N-acetyl-alpha-D-glucosamine 1-phosphate: step 1/1. It participates in bacterial outer membrane biogenesis; LPS lipid A biosynthesis. Catalyzes the last two sequential reactions in the de novo biosynthetic pathway for UDP-N-acetylglucosamine (UDP-GlcNAc). The C-terminal domain catalyzes the transfer of acetyl group from acetyl coenzyme A to glucosamine-1-phosphate (GlcN-1-P) to produce N-acetylglucosamine-1-phosphate (GlcNAc-1-P), which is converted into UDP-GlcNAc by the transfer of uridine 5-monophosphate (from uridine 5-triphosphate), a reaction catalyzed by the N-terminal domain. The sequence is that of Bifunctional protein GlmU from Corynebacterium jeikeium (strain K411).